A 459-amino-acid polypeptide reads, in one-letter code: Interleukin-7 receptor subunit alpha (459 aa).

Residues 1–20 (MTILGTTFGMVFSLLQVVSG) form the signal peptide. At 21-239 (ESGYAQNGDL…EINNSSGEMD (219 aa)) the chain is on the extracellular side. A disulfide bond links cysteine 42 and cysteine 57. Residues asparagine 49 and asparagine 65 are each glycosylated (N-linked (GlcNAc...) asparagine). 2 disulfides stabilise this stretch: cysteine 74–cysteine 82 and cysteine 108–cysteine 118. One can recognise a Fibronectin type-III domain in the interval 131–231 (APFDLSVVYR…PSYYFRTPEI (101 aa)). Residues asparagine 151 and asparagine 182 are each glycosylated (N-linked (GlcNAc...) asparagine). Residues 217–221 (WSEWS) carry the WSXWS motif motif. 2 N-linked (GlcNAc...) asparagine glycosylation sites follow: asparagine 232 and asparagine 233. Residues 240–264 (PILLTISILSFFSVALLVILACVLW) form a helical membrane-spanning segment. Residues 265–459 (KKRIKPIVWP…VTMSSFYQNQ (195 aa)) are Cytoplasmic-facing. The Box 1 motif motif lies at 272–280 (VWPSLPDHK). Threonine 282 carries the post-translational modification Phosphothreonine; by PKC.

Belongs to the type I cytokine receptor family. Type 4 subfamily. As to quaternary structure, the IL7 receptor is a heterodimer of IL7R and IL2RG. The TSLP receptor is a heterodimer of CRLF2 and IL7R. Interacts with CD53. N-glycosylated IL-7Ralpha binds IL7 300-fold more tightly than the unglycosylated form. Post-translationally, ubiquitinated by MARCHF8; leading to lysosomal degradation.

Its subcellular location is the cell membrane. It localises to the secreted. Its function is as follows. Receptor for interleukin-7. Also acts as a receptor for thymic stromal lymphopoietin (TSLP). This chain is Interleukin-7 receptor subunit alpha (IL7R), found in Homo sapiens (Human).